We begin with the raw amino-acid sequence, 661 residues long: Acetyl-coenzyme A synthetase (661 aa).

Residues 199-202 and threonine 317 each bind CoA; that span reads RGGK. ATP is bound by residues 393-395, 417-422, aspartate 508, and arginine 523; these read GEP and DTFWQT. Serine 531 provides a ligand contact to CoA. Arginine 534 contacts ATP. Arginine 596 is a binding site for CoA.

Belongs to the ATP-dependent AMP-binding enzyme family.

The catalysed reaction is acetate + ATP + CoA = acetyl-CoA + AMP + diphosphate. The polypeptide is Acetyl-coenzyme A synthetase (ACS-1) (Coprinopsis cinerea (Inky cap fungus)).